The chain runs to 427 residues: Interleukin-13 receptor subunit alpha-1 (427 aa).

An N-terminal signal peptide occupies residues 1 to 21; it reads MEWPARLCGLWALLLCAGGGG. Residues 22-343 lie on the Extracellular side of the membrane; it reads GGGGAAPTET…MSIGKKRNST (322 aa). Fibronectin type-III domains are found at residues 34–123, 128–226, and 227–339; these read PVTN…PPEG, AVTE…TSRV, and KPDP…IGKK. 2 N-linked (GlcNAc...) asparagine glycosylation sites follow: N37 and N61. 3 disulfides stabilise this stretch: C62–C102, C95–C117, and C134–C144. N-linked (GlcNAc...) asparagine glycans are attached at residues N105, N138, and N157. The cysteines at positions 173 and 185 are disulfide-linked. Residues N235, N265, N293, N329, and N341 are each glycosylated (N-linked (GlcNAc...) asparagine). Disulfide bonds link C257–C320 and C282–C296. The WSXWS motif motif lies at 327-331; the sequence is WSNWS. The chain crosses the membrane as a helical span at residues 344–367; that stretch reads LYITMLLIVPVIVAGAIIVLLLYL. At 368-427 the chain is on the cytoplasmic side; sequence KRLKIIIFPPIPDPGKIFKEMFGDQNDDTLHWKKYDIYEKQTKEETDSVVLIENLKKASQ. Residues 374-382 carry the Box 1 motif motif; that stretch reads IFPPIPDPG.

Belongs to the type I cytokine receptor family. Type 5 subfamily. As to quaternary structure, interleukin-13 receptor is a complex of IL4R, IL13RA1, and possibly other components. Interacts with TRAF3IP1. Interacts with IL4. As to expression, ubiquitous. Highest levels in heart, liver, skeletal muscle and ovary; lowest levels in brain, lung and kidney. Also found in B-cells, T-cells and endothelial cells.

The protein resides in the membrane. Binds with low affinity to interleukin-13 (IL13). Together with IL4RA can form a functional receptor for IL13. Also serves as an alternate accessory protein to the common cytokine receptor gamma chain for interleukin-4 (IL4) signaling, but cannot replace the function of IL2RG in allowing enhanced interleukin-2 (IL2) binding activity. The polypeptide is Interleukin-13 receptor subunit alpha-1 (IL13RA1) (Homo sapiens (Human)).